The chain runs to 419 residues: MAEPVGKRGRWSGGSGAGRGGRGGWGGRGRRPRAQRSPSRGTLDVVSVDLVTDSDEEILEVATARGAADEVEVEPPEPPGPVASRDNSNSDSEGEDRRPAGPPREPVRRRRRLVLDPGEAPLVPVYSGKVKSSLRLIPDDLSLLKLYPPGDEEEAELADSSGLYHEGSPSPGSPWKTKLRTKDKEEKKKTEFLDLDNSPLSPPSPRTKSRTHTRALKKLSEVNKRLQDLRSCLSPKPPQGQEQQGQEDEVVLVEGPTLPETPRLFPLKIRCRADLVRLPLRMSEPLQSVVDHMATHLGVSPSRILLLFGETELSPTATPRTLKLGVADIIDCVVLTSSPEATETSQQLQLRVQGKEKHQTLEVSLSRDSPLKTLMSHYEEAMGLSGRKLSFFFDGTKLSGRELPADLGMESGDLIEVWG.

Disordered stretches follow at residues 1 to 131 (MAEP…GKVK) and 151 to 215 (DEEE…HTRA). Positions 11–27 (WSGGSGAGRGGRGGWGG) are enriched in gly residues. Low complexity predominate over residues 35-51 (QRSPSRGTLDVVSVDLV). A phosphoserine mark is found at serine 54, serine 84, serine 88, serine 90, serine 92, and serine 127. Residues lysine 129 and lysine 131 each participate in a glycyl lysine isopeptide (Lys-Gly) (interchain with G-Cter in SUMO2) cross-link. Residues 180–192 (RTKDKEEKKKTEF) are compositionally biased toward basic and acidic residues. Phosphoserine occurs at positions 198, 201, 204, 220, and 314. Residues 209 to 231 (SRTHTRALKKLSEVNKRLQDLRS) adopt a coiled-coil conformation. Phosphothreonine occurs at positions 316 and 318. Positions 348–419 (LQLRVQGKEK…ESGDLIEVWG (72 aa)) constitute a Ubiquitin-like domain. Phosphoserine occurs at positions 369 and 390.

In terms of assembly, interacts with NFATC2, TRAF1, TRAF2 and PRMT1. Interacts with UBE2I/UBC9. Post-translationally, methylation at the N-terminus by PRMT1 modulates interaction with the NFAT complex and results in augmented cytokine production.

Its subcellular location is the nucleus. It localises to the cytoplasm. Its function is as follows. In T-helper 2 (Th2) cells, regulates the magnitude of NFAT-driven transcription of a specific subset of cytokine genes, including IL3, IL4, IL5 and IL13, but not IL2. Recruits PRMT1 to the IL4 promoter; this leads to enhancement of histone H4 'Arg-3'-methylation and facilitates subsequent histone acetylation at the IL4 locus, thus promotes robust cytokine expression. Down-regulates formation of poly-SUMO chains by UBE2I/UBC9. The polypeptide is NFATC2-interacting protein (NFATC2IP) (Homo sapiens (Human)).